Here is a 158-residue protein sequence, read N- to C-terminus: Transcription elongation factor GreA (158 aa).

This sequence belongs to the GreA/GreB family.

Necessary for efficient RNA polymerase transcription elongation past template-encoded arresting sites. The arresting sites in DNA have the property of trapping a certain fraction of elongating RNA polymerases that pass through, resulting in locked ternary complexes. Cleavage of the nascent transcript by cleavage factors such as GreA or GreB allows the resumption of elongation from the new 3'terminus. GreA releases sequences of 2 to 3 nucleotides. The sequence is that of Transcription elongation factor GreA from Acinetobacter baumannii (strain SDF).